A 332-amino-acid chain; its full sequence is F-box/SPRY domain-containing protein 1 (332 aa).

Residues 1 to 82 (MAENDGETIV…RSPRRPEVSA (82 aa)) are disordered. 2 stretches are compositionally biased toward polar residues: residues 15–28 (CNLT…SSGL) and 49–64 (NPSS…QLTP). The F-box domain occupies 79-127 (EVSASRLPLKVLNQIFQYLPLKDLRSAMLTCHSWNNALSMEDSDIWQYL). One can recognise a B30.2/SPRY domain in the interval 138 to 330 (SDPFLLAELG…VTMVYVGSPQ (193 aa)).

It belongs to the FBXO45/Fsn family. As to quaternary structure, component of an SCF (SKP1-CUL1-F-box protein) E3 ubiquitin ligase complex composed of cul-1, fsn-1, rpm-1 and skr-1. Interacts (via SPRY domain) with scd-2 (via cytoplasmic domain). Interacts (via SPRY domain) with convertase egl-3 (via C-terminus). Expressed in GABAergic neuromuscular junctions (NMJs).

It localises to the synapse. The protein operates within protein modification; protein ubiquitination. Its function is as follows. Component of a SCF (SKP1-CUL1-F-box protein) E3 ubiquitin ligase complex which is required for the restriction and/or maturation of synapses in GABAergic neuromuscular junction (NMJ) presynaptic neurons. Promotes NRJ synapse development and synaptic transmission by negatively regulating the daf-2/InsR pathway in muscles. By targeting convertase egl-3 for degradation, negatively modulates insulin-like protein ins-4 and ins-6 processing. May stabilize synapse formation by promoting the down-regulation of scd-2. Regulates axon termination in PLM and ALM neurons. The polypeptide is F-box/SPRY domain-containing protein 1 (fsn-1) (Caenorhabditis elegans).